Here is a 168-residue protein sequence, read N- to C-terminus: Shikimate kinase (168 aa).

11-16 (GAGKTT) contacts ATP. Thr15 contributes to the Mg(2+) binding site. Substrate-binding residues include Asp33, Arg57, and Gly78. Position 118 (Arg118) interacts with ATP. Residue Arg136 coordinates substrate. Arg153 provides a ligand contact to ATP.

This sequence belongs to the shikimate kinase family. As to quaternary structure, monomer. Mg(2+) serves as cofactor.

The protein resides in the cytoplasm. It catalyses the reaction shikimate + ATP = 3-phosphoshikimate + ADP + H(+). It functions in the pathway metabolic intermediate biosynthesis; chorismate biosynthesis; chorismate from D-erythrose 4-phosphate and phosphoenolpyruvate: step 5/7. Catalyzes the specific phosphorylation of the 3-hydroxyl group of shikimic acid using ATP as a cosubstrate. This chain is Shikimate kinase, found in Enterococcus faecalis (strain ATCC 700802 / V583).